Reading from the N-terminus, the 142-residue chain is Hemoglobin subunit pi (142 aa).

The 141-residue stretch at 2–142 (ALTQAEKAAV…ISSVLTEKYR (141 aa)) folds into the Globin domain. Heme b contacts are provided by His59 and His88.

The protein belongs to the globin family.

The pi' chain is the counterpart of the alpha chain in the major early embryonic hemoglobin P. The sequence is that of Hemoglobin subunit pi from Gallus gallus (Chicken).